Consider the following 407-residue polypeptide: Arylacetamide deacetylase-like 4 family member 1 (407 aa).

Residues 1 to 4 lie on the Cytoplasmic side of the membrane; sequence MLYL. A helical; Signal-anchor for type II membrane protein membrane pass occupies residues 5-25; that stretch reads VGFLLATVCLLVLGVNVWVLI. The Lumenal portion of the chain corresponds to 26–407; sequence DHFLTIDVPP…NAVVSYIKDL (382 aa). Residues 119–121 carry the Involved in the stabilization of the negatively charged intermediate by the formation of the oxyanion hole motif; it reads HGG. An N-linked (GlcNAc...) asparagine glycan is attached at Asn-168. Residues Ser-193, Asp-347, and His-377 contribute to the active site.

The protein belongs to the 'GDXG' lipolytic enzyme family.

Its subcellular location is the membrane. This chain is Arylacetamide deacetylase-like 4 family member 1, found in Mus musculus (Mouse).